Consider the following 648-residue polypeptide: Serine/threonine-protein phosphatase 1 regulatory subunit PIG1 (648 aa).

Over residues 20–51 (STSSFVSSTTSNSFSPLEDSTSASSSTSSSSS) the composition is skewed to low complexity. The tract at residues 20 to 52 (STSSFVSSTTSNSFSPLEDSTSASSSTSSSSSG) is disordered. In terms of domain architecture, CBM21 spans 201–331 (HSLELSDPVS…NNDYKNYEIT (131 aa)). Positions 593-609 (RESSSPEISPLNTTTSL) are enriched in polar residues. A disordered region spans residues 593-629 (RESSSPEISPLNTTTSLPFFPGDNMSDSSGEYEERTS).

Functionally, regulates the activity of glycogen synthase. It is most probably a regulatory subunit for protein phosphatase type 1. This Saccharomyces cerevisiae (strain ATCC 204508 / S288c) (Baker's yeast) protein is Serine/threonine-protein phosphatase 1 regulatory subunit PIG1 (PIG1).